The sequence spans 130 residues: Small ribosomal subunit protein uS8 (130 aa).

Belongs to the universal ribosomal protein uS8 family. In terms of assembly, part of the 30S ribosomal subunit. Contacts proteins S5 and S12.

One of the primary rRNA binding proteins, it binds directly to 16S rRNA central domain where it helps coordinate assembly of the platform of the 30S subunit. In Shewanella halifaxensis (strain HAW-EB4), this protein is Small ribosomal subunit protein uS8.